The sequence spans 114 residues: MNVLLGGLVIFATFVTLCNASCYIILNDMIPGDSTNECTDLKGNKHPINSKWRTDNCDSCTCREKEISCCTLVSTPVGYDTHKCQKIFNKEDCRISVVEKNDPSKTCEVNAWIM.

Residues 1 to 20 (MNVLLGGLVIFATFVTLCNA) form the signal peptide. 5 cysteine pairs are disulfide-bonded: Cys-22/Cys-70, Cys-38/Cys-62, Cys-57/Cys-93, Cys-60/Cys-69, and Cys-84/Cys-107.

Belongs to the beta-microseminoprotein family.

It is found in the secreted. In Saguinus oedipus (Cotton-top tamarin), this protein is Beta-microseminoprotein J1 (MSPJ).